We begin with the raw amino-acid sequence, 501 residues long: Sensor histidine kinase PdtaS (501 aa).

The GAF stretch occupies residues 4-150 (LGDLLAEHTV…HLETAYRLCA (147 aa)). Residues 179–291 (DGFIRLDVDG…TEVKRRDRAL (113 aa)) form a PAS-like region. Residues 300-495 (EIHHRVKNNL…DVVLRVPVGR (196 aa)) enclose the Histidine kinase domain. Phosphohistidine; by autocatalysis is present on H303.

Post-translationally, autophosphorylated.

It is found in the cytoplasm. It catalyses the reaction ATP + protein L-histidine = ADP + protein N-phospho-L-histidine.. Functionally, member of the two-component regulatory system PdtaR/PdtaS. This two-component system plays an essential role in mycobacterial adaptation to poor nutrient conditions. Nutrient deprivation results in increasing intracellular concentrations of cyclic diguanosine monophosphate (c-di-GMP), which binds to the PdtaS sensor and promotes its autophosphorylation, leading to the activation of the signaling cascade. The phosphate group is then transferred to PdtaR. Its function is as follows. In addition, the PdtaR/PdtaS two-component system controls copper and nitric oxide (NO) resistance downstream of the intramembrane protease Rip1. This coupled Rip1/PdtaS/PdtaR circuit controls NO resistance and acute lung infection in mice by relieving PdtaR/PdtaS-mediated repression of isonitrile chalkophore biosynthesis. Two signals are required to fully inactivate the PdtaR/PdtaS system and mediate NO resistance: a cytoplasmic inhibitory signal through the PdtaS kinase mediated by direct sensing of NO and the production of PPE1-5', an NO-induced small RNA, to sequester PdtaR. The polypeptide is Sensor histidine kinase PdtaS (pdtaS) (Mycobacterium tuberculosis (strain CDC 1551 / Oshkosh)).